A 656-amino-acid chain; its full sequence is Methylenetetrahydrofolate reductase (NADPH) (656 aa).

The segment covering 1 to 12 (MVNEARGNSSLN) has biased composition (polar residues). Residues 1–44 (MVNEARGNSSLNPCLEGSASSGSESSKDSSRCSTPGLDPERHER) are disordered. 10 positions are modified to phosphoserine: S9, S10, S18, S20, S21, S23, S25, S26, S29, and S30. At T34 the chain carries Phosphothreonine. The active-site Proton donor/acceptor is the E63. Residue 63–68 (EFFPPR) participates in NAD(+) binding. At Y90 the chain carries Phosphotyrosine. The residue at position 94 (T94) is a Phosphothreonine. Position 94 to 95 (94 to 95 (TW)) interacts with NAD(+). Position 94–95 (94–95 (TW)) interacts with FAD. At S103 the chain carries Phosphoserine. Residues H127, 157–159 (RGD), 174–175 (YA), Y197, 201–204 (HPEA), D210, and K217 each bind FAD. D159 is a substrate binding site. The substrate site is built by Q228, Y321, and R325. The residue at position 394 (S394) is a Phosphoserine. Position 451 is a phosphothreonine (T451). S-adenosyl-L-methionine is bound by residues N456, 461–464 (AAET), 481–485 (TINSQ), T560, and T573.

This sequence belongs to the methylenetetrahydrofolate reductase family. As to quaternary structure, homodimer. It depends on FAD as a cofactor. Phosphorylation of an N-terminal serine-rich phosphorylation region increases sensitivity to S-adenosylmethionine and inhibition.

The catalysed reaction is (6S)-5-methyl-5,6,7,8-tetrahydrofolate + NADP(+) = (6R)-5,10-methylene-5,6,7,8-tetrahydrofolate + NADPH + H(+). The protein operates within one-carbon metabolism; tetrahydrofolate interconversion. With respect to regulation, allosterically regulated by S-adenosylmethionine (SAM). In terms of biological role, catalyzes the conversion of 5,10-methylenetetrahydrofolate to 5-methyltetrahydrofolate, a cosubstrate for homocysteine remethylation to methionine. Represents a key regulatory connection between the folate and methionine cycles. The chain is Methylenetetrahydrofolate reductase (NADPH) from Homo sapiens (Human).